A 656-amino-acid polypeptide reads, in one-letter code: 1-deoxy-D-xylulose-5-phosphate synthase 1 (656 aa).

Residues His-73 and 113–115 (SHA) each bind thiamine diphosphate. Position 144 (Asp-144) interacts with Mg(2+). Residues 145–146 (GA), Asn-174, Tyr-285, and Glu-367 each bind thiamine diphosphate. Mg(2+) is bound at residue Asn-174. A disordered region spans residues 625-656 (AGDRAGGPAVEQPGDGRMSGDGRIVMPAQGEN).

Belongs to the transketolase family. DXPS subfamily. In terms of assembly, homodimer. Requires Mg(2+) as cofactor. Thiamine diphosphate serves as cofactor.

It carries out the reaction D-glyceraldehyde 3-phosphate + pyruvate + H(+) = 1-deoxy-D-xylulose 5-phosphate + CO2. It participates in metabolic intermediate biosynthesis; 1-deoxy-D-xylulose 5-phosphate biosynthesis; 1-deoxy-D-xylulose 5-phosphate from D-glyceraldehyde 3-phosphate and pyruvate: step 1/1. Functionally, catalyzes the acyloin condensation reaction between C atoms 2 and 3 of pyruvate and glyceraldehyde 3-phosphate to yield 1-deoxy-D-xylulose-5-phosphate (DXP). The protein is 1-deoxy-D-xylulose-5-phosphate synthase 1 of Streptomyces coelicolor (strain ATCC BAA-471 / A3(2) / M145).